The following is a 184-amino-acid chain: Large ribosomal subunit protein uL6 (184 aa).

The protein belongs to the universal ribosomal protein uL6 family. As to quaternary structure, part of the 50S ribosomal subunit.

Its function is as follows. This protein binds to the 23S rRNA, and is important in its secondary structure. It is located near the subunit interface in the base of the L7/L12 stalk, and near the tRNA binding site of the peptidyltransferase center. This chain is Large ribosomal subunit protein uL6, found in Onion yellows phytoplasma (strain OY-M).